We begin with the raw amino-acid sequence, 336 residues long: MKLSELLSTYSIETEFSNDFEVHALAELDKATPNDISYIDQARYLKLLKDSKAGAVFIRKKESSKVPKRMQALIVDNPHLAFAKASHAFKIPFFKNPESVSEPKHFKKVTIMPNVMIGEGVEIGENSLIYPGVVIADGVKIGKNCVLYPRVILYQNTILEDNVTIHAGSVIGGDGFGYAHTALGEHVKIEHVGIVRIQKNVEIGANTAIDRAVFGETLIKEGVKIDNLVQIGHNCVLGEHSIVVSQVGLSGSTTTGRNVVFGGQVGIGGHLHVGEFTQIGGKSAVGKDLPPNTNFAGAIPAMEIHEWHHFLAHLRTNFRKQQKTSLLQKAKGFFKS.

The Proton acceptor role is filled by His-233.

Belongs to the transferase hexapeptide repeat family. LpxD subfamily. In terms of assembly, homotrimer.

The enzyme catalyses a UDP-3-O-[(3R)-3-hydroxyacyl]-alpha-D-glucosamine + a (3R)-hydroxyacyl-[ACP] = a UDP-2-N,3-O-bis[(3R)-3-hydroxyacyl]-alpha-D-glucosamine + holo-[ACP] + H(+). It functions in the pathway bacterial outer membrane biogenesis; LPS lipid A biosynthesis. Catalyzes the N-acylation of UDP-3-O-acylglucosamine using 3-hydroxyacyl-ACP as the acyl donor. Is involved in the biosynthesis of lipid A, a phosphorylated glycolipid that anchors the lipopolysaccharide to the outer membrane of the cell. The sequence is that of UDP-3-O-acylglucosamine N-acyltransferase from Helicobacter pylori (strain HPAG1).